A 105-amino-acid chain; its full sequence is Small ribosomal subunit protein uS10c (105 aa).

This sequence belongs to the universal ribosomal protein uS10 family. As to quaternary structure, part of the 30S ribosomal subunit.

Its subcellular location is the plastid. It is found in the chloroplast. Its function is as follows. Involved in the binding of tRNA to the ribosomes. This Gracilaria tenuistipitata var. liui (Red alga) protein is Small ribosomal subunit protein uS10c.